The following is a 292-amino-acid chain: Selenate reductase subunit B (292 aa).

Residues 1 to 43 constitute a signal peptide (tat-type signal); that stretch reads MGSKETKNTSRRDFLIKGAGAAALGAGAFAISQVPLLEKLASA. 4Fe-4S ferredoxin-type domains lie at 84 to 113, 129 to 160, and 161 to 190; these read WIMV…PPGV, VTKK…KSED, and GIVA…FDWG. The [4Fe-4S] cluster site is built by cysteine 93, cysteine 96, cysteine 99, cysteine 103, cysteine 138, cysteine 141, cysteine 146, cysteine 150, cysteine 170, cysteine 173, cysteine 176, cysteine 180, cysteine 230, cysteine 233, cysteine 245, and cysteine 249.

The complex is composed of three subunits: SrdA, SrdB and SrdC. The cofactor is [4Fe-4S] cluster. In terms of processing, predicted to be exported by the Tat system. The position of the signal peptide cleavage has not been experimentally proven.

The protein resides in the secreted. It catalyses the reaction selenite + a quinone + H2O = selenate + a quinol. Component of the respiratory selenate reductase complex, which catalyzes the reduction of selenate to selenite. This subunit probably transfers electrons from SrdC to SrdA. The protein is Selenate reductase subunit B of Mesobacillus selenatarsenatis (strain DSM 18680 / JCM 14380 / FERM P-15431 / SF-1).